Here is a 321-residue protein sequence, read N- to C-terminus: AA9 family lytic polysaccharide monooxygenase C (321 aa).

The first 18 residues, 1–18, serve as a signal peptide directing secretion; sequence MKLQLIIPFSFLISYVSA. A Cu(2+)-binding site is contributed by His19. Asn33 is a glycosylation site (N-linked (GlcNAc...) asparagine). Disulfide bonds link Cys57–Cys191 and Cys161–Cys242. Cu(2+) is bound at residue His103. Residues His177 and Gln186 each contribute to the O2 site. A Cu(2+)-binding site is contributed by Tyr188. N-linked (GlcNAc...) asparagine glycosylation occurs at Asn195. A CBM1 domain is found at 283 to 319; that stretch reads GTAAIYAQCGGQGWTGATVCASGSKCVVSSAFYSQCL.

This sequence belongs to the polysaccharide monooxygenase AA9 family. Cu(2+) is required as a cofactor.

The protein resides in the secreted. The enzyme catalyses [(1-&gt;4)-beta-D-glucosyl]n+m + reduced acceptor + O2 = 4-dehydro-beta-D-glucosyl-[(1-&gt;4)-beta-D-glucosyl]n-1 + [(1-&gt;4)-beta-D-glucosyl]m + acceptor + H2O.. In terms of biological role, major lytic polysaccharide monooxygenase (LPMO) that depolymerizes crystalline and amorphous polysaccharides via the oxidation of scissile alpha- or beta-(1-4)-glycosidic bonds, yielding C1 and C4 oxidation products. Catalysis by LPMOs requires the reduction of the active-site copper from Cu(II) to Cu(I) by a reducing agent and H(2)O(2) or O(2) as a cosubstrate. In Botryotinia fuckeliana (strain B05.10) (Noble rot fungus), this protein is AA9 family lytic polysaccharide monooxygenase C.